The following is a 414-amino-acid chain: Enterobactin exporter EntS (414 aa).

Residues 1-21 (MNRQSWLLNLSLLKTHPAFRA) lie on the Cytoplasmic side of the membrane. Residues 22 to 42 (VFLARFISIVSLGLLGVAVPV) form a helical membrane-spanning segment. Over 43-55 (QIQMMTHSTWQVG) the chain is Periplasmic. A helical transmembrane segment spans residues 56 to 76 (LSVTLTGGAMFIGLMVGGVLA). Residues 77–83 (DRYERKK) lie on the Cytoplasmic side of the membrane. A helical membrane pass occupies residues 84 to 104 (VILLARGTCGIGFIGLCVNAL). The Periplasmic portion of the chain corresponds to 105-109 (LPEPS). Residues 110 to 130 (LLAIYLLGLWDGFFASLGVTA) traverse the membrane as a helical segment. Residues 131–156 (LLAATPALVGRENLMQAGAITMLTVR) lie on the Cytoplasmic side of the membrane. A helical transmembrane segment spans residues 157 to 177 (LGSVISPMLGGILLASGGVAW). Position 178 (asparagine 178) is a topological domain, periplasmic. A helical membrane pass occupies residues 179–199 (YGLAAAGTFITLLPLLTLPRL). The Cytoplasmic portion of the chain corresponds to 200–218 (PVPPQPRENPFIALLAAFR). Residues 219 to 239 (FLLASPLIGGIALLGGLVTMA) traverse the membrane as a helical segment. Residues 240–256 (SAVRVLYPALAMSWQMS) lie on the Periplasmic side of the membrane. The helical transmembrane segment at 257 to 277 (AAQIGLLYAAIPLGAAIGALT) threads the bilayer. The Cytoplasmic segment spans residues 278-287 (SGQLAHSVRP). A helical membrane pass occupies residues 288-307 (GLIMLVSTVGSFLAVGLFAI). Residues 308 to 313 (MPVWIA) lie on the Periplasmic side of the membrane. A helical transmembrane segment spans residues 314–336 (GVICLALFGWLSAISSLLQYTLL). The Cytoplasmic segment spans residues 337–356 (QTQTPENMLGRMNGLWTAQN). A helical transmembrane segment spans residues 357-377 (VTGDAIGAALLGGLGAMMTPV). A topological domain (periplasmic) is located at residue alanine 378. A helical membrane pass occupies residues 379 to 399 (SASVSGFGLVIIGLLLLLVLG). Residues 400 to 414 (ELRRFRQTPPVSDAG) lie on the Cytoplasmic side of the membrane.

Belongs to the major facilitator superfamily. EntS (TC 2.A.1.38) family.

It is found in the cell inner membrane. Its function is as follows. Component of an export pathway for enterobactin. This chain is Enterobactin exporter EntS, found in Salmonella typhimurium (strain LT2 / SGSC1412 / ATCC 700720).